A 191-amino-acid polypeptide reads, in one-letter code: Ion-translocating oxidoreductase complex subunit B (191 aa).

The segment at 1–26 (MSAVLIAVLALLALCLLGGAILGFAA) is hydrophobic. In terms of domain architecture, 4Fe-4S spans 32–90 (EGDPIAEQINALLPQTQCGQCGYPGCKPYAEAIAGGDKINKCPPGGEATIQALADLLDV). C49, C52, C57, C73, C114, C117, C120, C124, C144, C147, C150, and C154 together coordinate [4Fe-4S] cluster. 4Fe-4S ferredoxin-type domains follow at residues 105–134 (MVAY…GAAR) and 135–164 (QMHT…MIEV).

This sequence belongs to the 4Fe4S bacterial-type ferredoxin family. RnfB subfamily. In terms of assembly, the complex is composed of six subunits: RnfA, RnfB, RnfC, RnfD, RnfE and RnfG. [4Fe-4S] cluster is required as a cofactor.

Its subcellular location is the cell inner membrane. In terms of biological role, part of a membrane-bound complex that couples electron transfer with translocation of ions across the membrane. This Stutzerimonas stutzeri (strain A1501) (Pseudomonas stutzeri) protein is Ion-translocating oxidoreductase complex subunit B.